A 687-amino-acid chain; its full sequence is Dictomallein (687 aa).

2 disordered regions span residues 1–45 (MGNG…SRRL) and 73–112 (TAGGAAPLTPAVASPAGPTGSTPGSTPGATTAPAPSSTSA). In terms of domain architecture, Peptidase M66 spans 233–501 (PVFGTDADVQ…QAWIASRVLA (269 aa)). His393 is a binding site for Zn(2+). Glu394 is a catalytic residue. His397 and His403 together coordinate Zn(2+).

Belongs to the dictomallein family. The cofactor is Zn(2+).

This is Dictomallein (dtmL) from Burkholderia mallei (strain NCTC 10247).